A 573-amino-acid chain; its full sequence is Probable D-xylulose kinase A (573 aa).

Substrate-binding residues include H97, R168, D284, and N285. Residues W366, 471–472 (GG), and N475 each bind ATP.

Belongs to the FGGY kinase family.

The protein localises to the cytoplasm. It carries out the reaction D-xylulose + ATP = D-xylulose 5-phosphate + ADP + H(+). Its function is as follows. Highly specific D-xylulose kinase which participates in the catabolism of xylose. Xylose is a major component of hemicelluloses such as xylan. Most fungi utilize D-xylose via three enzymatic reactions, xylose reductase (XR), xylitol dehydrogenase (XDH), and xylulokinase, to form xylulose 5-phosphate, which enters pentose phosphate pathway. This Neosartorya fischeri (strain ATCC 1020 / DSM 3700 / CBS 544.65 / FGSC A1164 / JCM 1740 / NRRL 181 / WB 181) (Aspergillus fischerianus) protein is Probable D-xylulose kinase A (xkiA).